A 291-amino-acid chain; its full sequence is 33 kDa chaperonin (291 aa).

Intrachain disulfides connect Cys-229–Cys-231 and Cys-262–Cys-265.

It belongs to the HSP33 family. Under oxidizing conditions two disulfide bonds are formed involving the reactive cysteines. Under reducing conditions zinc is bound to the reactive cysteines and the protein is inactive.

The protein resides in the cytoplasm. Its function is as follows. Redox regulated molecular chaperone. Protects both thermally unfolding and oxidatively damaged proteins from irreversible aggregation. Plays an important role in the bacterial defense system toward oxidative stress. This Vibrio vulnificus (strain YJ016) protein is 33 kDa chaperonin.